A 326-amino-acid chain; its full sequence is Flap endonuclease 1 (326 aa).

The N-domain stretch occupies residues 1 to 100 (MGNADLRSLA…DEVEKRREQR (100 aa)). D28, D82, E154, E156, D175, D177, and D225 together coordinate Mg(2+). The tract at residues 118–246 (RVAKLDSRTQ…TAVKDLHEHG (129 aa)) is I-domain. The interaction with PCNA stretch occupies residues 318-326 (VQTGLDRWA).

This sequence belongs to the XPG/RAD2 endonuclease family. FEN1 subfamily. Interacts with PCNA. PCNA stimulates the nuclease activity without altering cleavage specificity. Requires Mg(2+) as cofactor.

Functionally, structure-specific nuclease with 5'-flap endonuclease and 5'-3' exonuclease activities involved in DNA replication and repair. During DNA replication, cleaves the 5'-overhanging flap structure that is generated by displacement synthesis when DNA polymerase encounters the 5'-end of a downstream Okazaki fragment. Binds the unpaired 3'-DNA end and kinks the DNA to facilitate 5' cleavage specificity. Cleaves one nucleotide into the double-stranded DNA from the junction in flap DNA, leaving a nick for ligation. Also involved in the base excision repair (BER) pathway. Acts as a genome stabilization factor that prevents flaps from equilibrating into structures that lead to duplications and deletions. Also possesses 5'-3' exonuclease activity on nicked or gapped double-stranded DNA. This is Flap endonuclease 1 from Haloarcula marismortui (strain ATCC 43049 / DSM 3752 / JCM 8966 / VKM B-1809) (Halobacterium marismortui).